Reading from the N-terminus, the 234-residue chain is Tissue factor pathway inhibitor 2 (234 aa).

The first 22 residues, 1–22, serve as a signal peptide directing secretion; the sequence is MDSVRPLWLMLLSLLLVGTALG. 3 consecutive BPTI/Kunitz inhibitor domains span residues 36–86, 96–146, and 155–205; these read CLLP…NEAC, CRLK…MDFC, and CYSP…KRTC. Disulfide bonds link C36–C86, C45–C69, C61–C82, C96–C146, C105–C129, C121–C142, C155–C205, C164–C188, and C180–C201. An N-linked (GlcNAc...) asparagine glycan is attached at N115. 2 N-linked (GlcNAc...) asparagine glycosylation sites follow: N167 and N184.

In terms of assembly, finds in a complex with ABCB1, TFPI2 and PPP2R3C; leading to the dephosphorylation of ABCB1.

It is found in the secreted. Its function is as follows. May play a role in the regulation of plasmin-mediated matrix remodeling. Inhibits trypsin, plasmin, factor VIIa/tissue factor and weakly factor Xa. Has no effect on thrombin. This Bos taurus (Bovine) protein is Tissue factor pathway inhibitor 2 (TFPI2).